Here is a 607-residue protein sequence, read N- to C-terminus: Synaptotagmin-like protein 3 (607 aa).

Positions 4–123 (EVDLESFKEL…IKTGEWFFEE (120 aa)) constitute a RabBD domain. The disordered stretch occupies residues 221–279 (VGHTERRSQSDTAVNVTSRKASTPDILKAFHQEDPKHPPDPVLKQDTPPSSPTHSAVFS). Over residues 230-241 (SDTAVNVTSRKA) the composition is skewed to polar residues. The segment covering 248-259 (KAFHQEDPKHPP) has biased composition (basic and acidic residues). C2 domains lie at 305-430 (VTGE…ARWY) and 458-590 (LPAG…LQWH).

Monomer. Binds NRXN1. Binds RAB27A that has been activated by GTP-binding via its N-terminus. As to expression, highly expressed in spleen and lung. Detected at lower levels in heart and testis.

The protein resides in the endomembrane system. Functionally, may act as Rab effector protein and play a role in vesicle trafficking. Binds phospholipids in the presence of calcium ions. This chain is Synaptotagmin-like protein 3 (Sytl3), found in Mus musculus (Mouse).